The following is a 284-amino-acid chain: Bifunctional protein FolD (284 aa).

NADP(+)-binding positions include 165-167 (GRS) and S190.

Belongs to the tetrahydrofolate dehydrogenase/cyclohydrolase family. As to quaternary structure, homodimer.

The enzyme catalyses (6R)-5,10-methylene-5,6,7,8-tetrahydrofolate + NADP(+) = (6R)-5,10-methenyltetrahydrofolate + NADPH. It carries out the reaction (6R)-5,10-methenyltetrahydrofolate + H2O = (6R)-10-formyltetrahydrofolate + H(+). Its pathway is one-carbon metabolism; tetrahydrofolate interconversion. In terms of biological role, catalyzes the oxidation of 5,10-methylenetetrahydrofolate to 5,10-methenyltetrahydrofolate and then the hydrolysis of 5,10-methenyltetrahydrofolate to 10-formyltetrahydrofolate. This is Bifunctional protein FolD from Streptococcus gordonii (strain Challis / ATCC 35105 / BCRC 15272 / CH1 / DL1 / V288).